Consider the following 256-residue polypeptide: Matrix protein (256 aa).

An interaction with M2-1 region spans residues 1 to 110 (METYVNKLHE…KLAYDVTTPC (110 aa)). Residues 110–183 (CEIKACSLTC…LNSLENIATT (74 aa)) form a nuclear targeting and binding to host importin KPNB1 region. The Nuclear export signal signature appears at 194 to 206 (IIPYAGLVLVITV). Thr205 is modified (phosphothreonine).

The protein belongs to the pneumovirinae M protein family. Forms dimers. Forms higher-order oligomers. Interacts with glycoprotein G (via N-terminus). Interacts with protein M2-1; this interaction directs the matrix protein localization to cytoplasmic inclusions comprising viral proteins L, N, P, and M2-1 and mediates the matrix protein association with the nucleocapsid. Interacts with host KPNB1; this interaction mediates nuclear import of the matrix protein early during infection. Interacts with host AP3M1; this interaction plays an essential role in trafficking the matrix protein in host cells. Interacts with host CAV1; this interaction probably facilitates viral budding. Interacts with host CFL1; this interaction probably facilitates viral replication. Interacts with host ZNF502; this interaction probably facilitates viral release. Phosphorylation is important for oligomerization.

The protein localises to the virion. The protein resides in the host cytoplasm. Its subcellular location is the host nucleus. It is found in the host cell membrane. In terms of biological role, plays a crucial role in virus assembly into filaments and budding. Early in infection, localizes in the nucleus where it inhibits host cell transcription through direct binding to host chromatin. Later in infection, traffics to the cytoplasm through the action of host CRM1 to associate with inclusion bodies, the site of viral transcription and replication. During virus assembly and budding, acts as a bridge between the nucleocapsid and the lipid bilayer. This Human respiratory syncytial virus B (strain B1) protein is Matrix protein (M).